The sequence spans 1014 residues: MICAL-like protein 2 (1014 aa).

One can recognise a Calponin-homology (CH) domain in the interval 1–107 (MAAIKALQEW…YVSQYYNYFH (107 aa)). The interval 1 to 261 (MAAIKALQEW…KLSNLASRQP (261 aa)) is forms an intramolecular interaction with the C-terminal coiled coil domain keeping the protein in a closed conformation. Phosphoserine occurs at positions 110, 144, and 154. The interval 114–181 (GMAGMKRPSS…PSPKAAPGTV (68 aa)) is disordered. Positions 187-249 (SICGVCGKHV…THHSSEAVSV (63 aa)) constitute an LIM zinc-binding domain. Ser-250 carries the phosphoserine modification. The tract at residues 262–394 (GGGIADTRPI…QGQAASKGVK (133 aa)) is necessary and sufficient for interaction with actinins. Residues 262–810 (GGGIADTRPI…QDDQTRSCKE (549 aa)) form a mediates targeting to the cell plasma membrane region. Disordered stretches follow at residues 311–450 (LTPP…SRVP) and 609–780 (TLPK…RRKK). Over residues 332 to 355 (STVTTTSANSKATTHVTNSSPVGW) the composition is skewed to polar residues. Low complexity predominate over residues 356–368 (SSSAQSSTGTSGS). A compositionally biased stretch (polar residues) spans 384–398 (PQGQAASKGVKTQLN). 2 stretches are compositionally biased toward low complexity: residues 399–419 (SSTD…SSRT) and 438–447 (PASSSSSHAS). Composition is skewed to polar residues over residues 624–633 (LSHSTTQAFS) and 646–656 (VGSTSWTSVSL). Composition is skewed to basic and acidic residues over residues 701–711 (EGWRARLKPVD) and 720–737 (LEQK…DTPR). Residues 747–758 (IHITLTPIQQKR) are compositionally biased toward polar residues. Thr-759 carries the phosphothreonine modification. Ser-773 and Ser-837 each carry phosphoserine. Positions 811–918 (KTATWGTRES…LMYKSKDQCL (108 aa)) are forms an intramolecular interaction with the N-terminal Calponin-homology and LIM zinc-binding domains-containing region keeping the protein in a closed conformation. A bMERB domain is found at 838–985 (PVRLHPNYIS…EQEEDQMLES (148 aa)). The stretch at 845-885 (YISQEELQRQLQDIERQLDALELRGVELEKRLRAAEGDASE) forms a coiled coil. The interval 918-1014 (LEERQLDLQG…WSSKSKSGQT (97 aa)) is mediates interaction with RAB13 and is required for transition from the closed to the open conformation.

As to quaternary structure, interacts with RAB13 (GTP-bound form); competes with RAB8A and is involved in tight junctions assembly. Interacts with RAB8A; competes with RAB13 and is involved in E-cadherin endocytic recycling. Interacts with RAB8B. Interacts (preferentially in opened conformation) with ACTN1 and ACTN4; stimulated by RAB13 activation. Interacts (via calponin-homology (CH) domain) with the filamins FLNA, FLNB and FLNC (via actin-binding domain).

The protein localises to the cell membrane. It localises to the cell junction. The protein resides in the tight junction. It is found in the recycling endosome. Its subcellular location is the cell projection. The protein localises to the neuron projection. It localises to the cytoplasm. The protein resides in the cytoskeleton. Effector of small Rab GTPases which is involved in junctional complexes assembly through the regulation of cell adhesion molecules transport to the plasma membrane and actin cytoskeleton reorganization. Regulates the endocytic recycling of occludins, claudins and E-cadherin to the plasma membrane and may thereby regulate the establishment of tight junctions and adherens junctions. In parallel, may regulate actin cytoskeleton reorganization directly through interaction with F-actin or indirectly through actinins and filamins. Most probably involved in the processes of epithelial cell differentiation, cell spreading and neurite outgrowth. Undergoes liquid-liquid phase separation to form tubular recycling endosomes. Plays 2 sequential roles in the biogenesis of tubular recycling endosomes: first organizes phase separation and then the closed form formed by interaction with RAB8A promotes endosomal tubulation. This chain is MICAL-like protein 2 (Micall2), found in Rattus norvegicus (Rat).